Reading from the N-terminus, the 669-residue chain is DNA ligase (669 aa).

NAD(+)-binding positions include 34-38, 83-84, and Glu114; these read DAEYD and SL. The active-site N6-AMP-lysine intermediate is Lys116. The NAD(+) site is built by Arg137, Glu171, Lys287, and Lys311. 4 residues coordinate Zn(2+): Cys405, Cys408, Cys423, and Cys428. The BRCT domain maps to 591–669; sequence NIASYFAGKT…EERFLQELNK (79 aa).

The protein belongs to the NAD-dependent DNA ligase family. LigA subfamily. Mg(2+) is required as a cofactor. The cofactor is Mn(2+).

It carries out the reaction NAD(+) + (deoxyribonucleotide)n-3'-hydroxyl + 5'-phospho-(deoxyribonucleotide)m = (deoxyribonucleotide)n+m + AMP + beta-nicotinamide D-nucleotide.. Functionally, DNA ligase that catalyzes the formation of phosphodiester linkages between 5'-phosphoryl and 3'-hydroxyl groups in double-stranded DNA using NAD as a coenzyme and as the energy source for the reaction. It is essential for DNA replication and repair of damaged DNA. The polypeptide is DNA ligase (Bacillus cytotoxicus (strain DSM 22905 / CIP 110041 / 391-98 / NVH 391-98)).